Reading from the N-terminus, the 464-residue chain is Siroheme synthase (464 aa).

Residues 1-203 (MEFLPLFHNL…GQGAEAERLL (203 aa)) are precorrin-2 dehydrogenase /sirohydrochlorin ferrochelatase. Residues 22 to 23 (EI) and 43 to 44 (PE) contribute to the NAD(+) site. Position 128 is a phosphoserine (serine 128). The segment at 216–464 (GEVYLVGAGP…AWFEGAQATV (249 aa)) is uroporphyrinogen-III C-methyltransferase. Proline 225 is a binding site for S-adenosyl-L-methionine. Residue aspartate 248 is the Proton acceptor of the active site. Catalysis depends on lysine 270, which acts as the Proton donor. S-adenosyl-L-methionine contacts are provided by residues 301 to 303 (GGD), isoleucine 306, 331 to 332 (TA), methionine 383, and glycine 412.

In the N-terminal section; belongs to the precorrin-2 dehydrogenase / sirohydrochlorin ferrochelatase family. It in the C-terminal section; belongs to the precorrin methyltransferase family.

The catalysed reaction is uroporphyrinogen III + 2 S-adenosyl-L-methionine = precorrin-2 + 2 S-adenosyl-L-homocysteine + H(+). It catalyses the reaction precorrin-2 + NAD(+) = sirohydrochlorin + NADH + 2 H(+). The enzyme catalyses siroheme + 2 H(+) = sirohydrochlorin + Fe(2+). It participates in cofactor biosynthesis; adenosylcobalamin biosynthesis; precorrin-2 from uroporphyrinogen III: step 1/1. Its pathway is cofactor biosynthesis; adenosylcobalamin biosynthesis; sirohydrochlorin from precorrin-2: step 1/1. It functions in the pathway porphyrin-containing compound metabolism; siroheme biosynthesis; precorrin-2 from uroporphyrinogen III: step 1/1. The protein operates within porphyrin-containing compound metabolism; siroheme biosynthesis; siroheme from sirohydrochlorin: step 1/1. It participates in porphyrin-containing compound metabolism; siroheme biosynthesis; sirohydrochlorin from precorrin-2: step 1/1. Its function is as follows. Multifunctional enzyme that catalyzes the SAM-dependent methylations of uroporphyrinogen III at position C-2 and C-7 to form precorrin-2 via precorrin-1. Then it catalyzes the NAD-dependent ring dehydrogenation of precorrin-2 to yield sirohydrochlorin. Finally, it catalyzes the ferrochelation of sirohydrochlorin to yield siroheme. This chain is Siroheme synthase, found in Pseudomonas savastanoi pv. phaseolicola (strain 1448A / Race 6) (Pseudomonas syringae pv. phaseolicola (strain 1448A / Race 6)).